The following is a 270-amino-acid chain: 2-aminoethanethiol dioxygenase (270 aa).

A disordered region spans residues 21–48 (FRGSGGGRGASDRDAASGPEAPMQPGFP). Residues His-112 and His-114 each coordinate Fe cation. Residues 140-164 (GGQRPRALPPEQQFEPPLQPREREA) form a disordered region. His-193 is a binding site for Fe cation. Residues 220 to 223 (CHYY) constitute a cross-link (3'-(S-cysteinyl)-tyrosine (Cys-Tyr)).

Monomer. Fe cation is required as a cofactor.

It catalyses the reaction cysteamine + O2 = hypotaurine + H(+). The enzyme catalyses N-terminal L-cysteinyl-[protein] + O2 = N-terminal S-hydroxy-S-oxy-L-cysteinyl-[protein] + H(+). Plays a vital role in regulating thiol metabolism and preserving oxygen homeostasis by oxidizing the sulfur of cysteamine and N-terminal cysteine-containing proteins to their corresponding sulfinic acids using O2 as a cosubstrate. Catalyzes the oxidation of cysteamine (2-aminoethanethiol) to hypotaurine. Catalyzes the oxidation of regulators of G-protein signaling 4 (RGS4) and 5 (RGS5) and interleukin-32 (IL32). This Homo sapiens (Human) protein is 2-aminoethanethiol dioxygenase (ADO).